The primary structure comprises 339 residues: Anthranilate phosphoribosyltransferase (339 aa).

5-phospho-alpha-D-ribose 1-diphosphate is bound by residues G81, 84-85, T89, 91-94, 109-117, and S121; these read GD, NIST, and KHGNRSVSS. G81 is an anthranilate binding site. Residue S93 coordinates Mg(2+). N112 serves as a coordination point for anthranilate. R165 contacts anthranilate. Positions 224 and 225 each coordinate Mg(2+).

It belongs to the anthranilate phosphoribosyltransferase family. Homodimer. It depends on Mg(2+) as a cofactor.

The catalysed reaction is N-(5-phospho-beta-D-ribosyl)anthranilate + diphosphate = 5-phospho-alpha-D-ribose 1-diphosphate + anthranilate. It functions in the pathway amino-acid biosynthesis; L-tryptophan biosynthesis; L-tryptophan from chorismate: step 2/5. Catalyzes the transfer of the phosphoribosyl group of 5-phosphorylribose-1-pyrophosphate (PRPP) to anthranilate to yield N-(5'-phosphoribosyl)-anthranilate (PRA). The polypeptide is Anthranilate phosphoribosyltransferase (Thermosynechococcus vestitus (strain NIES-2133 / IAM M-273 / BP-1)).